Consider the following 202-residue polypeptide: Adapter protein MecA 2 (202 aa).

It belongs to the MecA family. Homodimer.

Enables the recognition and targeting of unfolded and aggregated proteins to the ClpC protease or to other proteins involved in proteolysis. Acts negatively in the development of competence by binding ComK and recruiting it to the ClpCP protease. When overexpressed, inhibits sporulation. Also involved in Spx degradation by ClpC. In Bacillus anthracis, this protein is Adapter protein MecA 2 (mecA2).